A 391-amino-acid polypeptide reads, in one-letter code: 8-amino-7-oxononanoate synthase 1 (391 aa).

108–109 (GF) is a pyridoxal 5'-phosphate binding site. Histidine 133 lines the substrate pocket. Pyridoxal 5'-phosphate-binding positions include serine 180, 205 to 208 (DDAH), and 236 to 239 (TLSK). Lysine 239 bears the N6-(pyridoxal phosphate)lysine mark. Threonine 353 contacts substrate.

It belongs to the class-II pyridoxal-phosphate-dependent aminotransferase family. BioF subfamily. As to quaternary structure, homodimer. The cofactor is pyridoxal 5'-phosphate.

The enzyme catalyses 6-carboxyhexanoyl-[ACP] + L-alanine + H(+) = (8S)-8-amino-7-oxononanoate + holo-[ACP] + CO2. It functions in the pathway cofactor biosynthesis; biotin biosynthesis. Functionally, catalyzes the decarboxylative condensation of pimeloyl-[acyl-carrier protein] and L-alanine to produce 8-amino-7-oxononanoate (AON), [acyl-carrier protein], and carbon dioxide. The chain is 8-amino-7-oxononanoate synthase 1 from Bacillus velezensis (strain DSM 23117 / BGSC 10A6 / LMG 26770 / FZB42) (Bacillus amyloliquefaciens subsp. plantarum).